A 550-amino-acid chain; its full sequence is Thioredoxin domain-containing protein 2 (550 aa).

A disordered region spans residues 1-50; that stretch reads MFKKNQKLSKDKGLEVNSVQAGAPEESDVKLNNGGKANERGSNEFLDTAQ. Ser42 and Ser51 each carry phosphoserine. Positions 63-428 are disordered; that stretch reads MLHMSTEESE…IKSSEDVQPS (366 aa). Polar residues-rich tracts occupy residues 73–87, 96–105, and 112–140; these read PPQQVSSTSMFSENT, PKSSTKNTQL, and KTSSYSKQTNSSNIPKSLAITTYPKQGST. 22 repeat units span residues 104-118, 119-133, 134-148, 149-163, 164-178, 179-193, 194-208, 209-223, 224-238, 239-252, 253-267, 268-282, 283-297, 298-312, 313-327, 328-342, 343-357, 358-384, 385-399, 400-412, 413-425, and 426-440. The tract at residues 104–440 is 22 X 15 AA approximate tandem repeat of Q-P-K-X-G-D-I-P-K-S-[PS]-E-[KE]-X-I; sequence QLKQEDISKT…EIFPFEAEIE (337 aa). 4 stretches are compositionally biased toward basic and acidic residues: residues 148-205, 217-259, 277-304, and 313-348; these read THDR…KSLE, KSSE…ESET, QVKDSMKSKESKIRKPLKDSIQSKENKI, and QPKEGKIHKPLKDSLPSKEGDISKPSEDTIQAKEEI. A Phosphoserine modification is found at Ser158. Phosphoserine occurs at positions 351 and 379. Residues 401-550 enclose the Thioredoxin domain; the sequence is KEEITVSPED…KLEKSIAELK (150 aa). The residue at position 407 (Ser407) is a Phosphoserine. The cysteines at positions 477 and 480 are disulfide-linked.

In terms of tissue distribution, testis-specific. Strongly expressed in the testicular seminiferous tubules, mostly in the round spermatids.

The protein localises to the cytoplasm. Probably plays a regulatory role in sperm development. May participate in regulation of fibrous sheath (FS) assembly by supporting the formation of disulfide bonds during sperm tail morphogenesis. May also be required to rectify incorrect disulfide pairing and generate suitable pairs between the FS constituents. Can reduce disulfide bonds in vitro in the presence of NADP and thioredoxin reductase. In Rattus norvegicus (Rat), this protein is Thioredoxin domain-containing protein 2 (Txndc2).